A 269-amino-acid polypeptide reads, in one-letter code: Elongation factor Ts (269 aa).

The interval 76 to 79 (TDFV) is involved in Mg(2+) ion dislocation from EF-Tu.

The protein belongs to the EF-Ts family.

It is found in the cytoplasm. In terms of biological role, associates with the EF-Tu.GDP complex and induces the exchange of GDP to GTP. It remains bound to the aminoacyl-tRNA.EF-Tu.GTP complex up to the GTP hydrolysis stage on the ribosome. This is Elongation factor Ts from Deinococcus geothermalis (strain DSM 11300 / CIP 105573 / AG-3a).